Here is a 1090-residue protein sequence, read N- to C-terminus: Nitrogen assimilation transcription factor nit-4 (1090 aa).

Over residues M1–A14 the composition is skewed to polar residues. The segment at M1–N43 is disordered. Residues C53–C81 constitute a DNA-binding region (zn(2)-C6 fungal-type). 6 disordered regions span residues R145–V176, F666–P689, H773–Q798, G825–P875, Q936–Q999, and H1033–G1053. A compositionally biased stretch (basic and acidic residues) spans G167–V176. Residues F666–T677 are compositionally biased toward polar residues. The segment covering Q849–Q859 has biased composition (low complexity). Composition is skewed to gly residues over residues L940 to G965 and N976 to T988. Residues Q990–Q999 show a composition bias toward low complexity.

The protein localises to the nucleus. Its function is as follows. Pathway-specific regulatory gene of nitrate assimilation; it activates the transcription of the genes for nitrate and nitrite reductases. The chain is Nitrogen assimilation transcription factor nit-4 (nit-4) from Neurospora crassa (strain ATCC 24698 / 74-OR23-1A / CBS 708.71 / DSM 1257 / FGSC 987).